The following is a 713-amino-acid chain: Ribosomal RNA large subunit methyltransferase K/L (713 aa).

Residues 43–154 form the THUMP domain; that stretch reads LAYRITLWTR…NGVITIAMNF (112 aa).

The protein belongs to the methyltransferase superfamily. RlmKL family.

It localises to the cytoplasm. The enzyme catalyses guanosine(2445) in 23S rRNA + S-adenosyl-L-methionine = N(2)-methylguanosine(2445) in 23S rRNA + S-adenosyl-L-homocysteine + H(+). It catalyses the reaction guanosine(2069) in 23S rRNA + S-adenosyl-L-methionine = N(2)-methylguanosine(2069) in 23S rRNA + S-adenosyl-L-homocysteine + H(+). Specifically methylates the guanine in position 2445 (m2G2445) and the guanine in position 2069 (m7G2069) of 23S rRNA. In Shewanella sp. (strain MR-4), this protein is Ribosomal RNA large subunit methyltransferase K/L.